The following is a 79-amino-acid chain: Sperm-specific basic nuclear protein SP4 (79 aa).

The segment at 1-79 is disordered; sequence MSKVSGGSRR…ARDYGSDYRS (79 aa). The span at 9–60 shows a compositional bias: basic residues; sequence RRTRARRPMSNRRGRRSQSAAHRSRAQRRRRRTGTTRRARTSTARRARTRTA. Repeats lie at residues 45–52 and 53–60; these read RRARTSTA and RRARTRTA. Residues 61–79 show a composition bias toward basic and acidic residues; sequence RRSDLTRMMARDYGSDYRS.

The protein resides in the nucleus. The polypeptide is Sperm-specific basic nuclear protein SP4 (sp4-a) (Xenopus laevis (African clawed frog)).